Reading from the N-terminus, the 435-residue chain is MNRYHFVGIKGTGMSPLAQILFDMNNEVRGSDVEKAFFTEEALNRKGIEILPFDPENISEDQIVVQGNAFSDDHPEIVRARELGLTIYKYYEFLGELANHYTSVAITGSHGKTSTTGLLAHVMRGIEPTSFLIGDGTGEGVADSKNFVFEACEYKRHFLYYRPDYAIMTNIDFDHSDYFSGLDDVIDAFQEMAKQVKKGIIACGDDENLQQIQANVPLVYYGFGAHNDFRAEQVTSTENGTTFDVFLRDDFYGTFRIPGYGDHSVLNALAVIATCDYENLPKELVKERLETFNGVKRRFSESTLNDQVLVDDYAHHPREISATVEAARKKYGNREVVAIFQPHTYTRLKSFMDDFATALAEADTVYLCDIFGSAREQEGTVTIEDLQSRIEGAHILKRGGTGVLRNHADAVLLFMGAGDIQTYQREYEEVVKLEA.

Position 108–114 (108–114 (GSHGKTS)) interacts with ATP.

It belongs to the MurCDEF family.

Its subcellular location is the cytoplasm. It catalyses the reaction UDP-N-acetyl-alpha-D-muramate + L-alanine + ATP = UDP-N-acetyl-alpha-D-muramoyl-L-alanine + ADP + phosphate + H(+). Its pathway is cell wall biogenesis; peptidoglycan biosynthesis. Functionally, cell wall formation. The sequence is that of UDP-N-acetylmuramate--L-alanine ligase from Exiguobacterium sp. (strain ATCC BAA-1283 / AT1b).